The sequence spans 300 residues: MSTPFVTTLSPSLHGLLKDRLEEKGFILTQPQYTIFQARSPSVTCVLYSSGKLVVQGKGSKEFIKFFLEPEILLTFTHNRVEEDLRPRLGVDESGKGDFFGPLCIAGVYAKDEETLKNLYKTKIQDSKLLNDAQILSLAKTIRASCSCDVMILYPEKYNELYGKFHNLNILLAWAHATIIDQLAPRPSGEVFAISDQFASSESVLLNALRKKNTDISVIQKVRAEQDIVVAAASILAREAFITAMTKLEQRFSLKLPKGASAQVKSVGKSILNSRGKEVLSLICKTHFKTFNEICDSASA.

Positions arginine 86 to alanine 300 constitute an RNase H type-2 domain. A divalent metal cation contacts are provided by aspartate 92, glutamate 93, and aspartate 196.

It belongs to the RNase HII family. RnhC subfamily. Mn(2+) is required as a cofactor. The cofactor is Mg(2+).

It localises to the cytoplasm. The enzyme catalyses Endonucleolytic cleavage to 5'-phosphomonoester.. Endonuclease that specifically degrades the RNA of RNA-DNA hybrids. This Chlamydia caviae (strain ATCC VR-813 / DSM 19441 / 03DC25 / GPIC) (Chlamydophila caviae) protein is Ribonuclease HIII.